Here is a 371-residue protein sequence, read N- to C-terminus: 4-hydroxy-3-methylbut-2-en-1-yl diphosphate synthase (flavodoxin) (371 aa).

Positions 270, 273, 305, and 312 each coordinate [4Fe-4S] cluster.

It belongs to the IspG family. Requires [4Fe-4S] cluster as cofactor.

The catalysed reaction is (2E)-4-hydroxy-3-methylbut-2-enyl diphosphate + oxidized [flavodoxin] + H2O + 2 H(+) = 2-C-methyl-D-erythritol 2,4-cyclic diphosphate + reduced [flavodoxin]. It participates in isoprenoid biosynthesis; isopentenyl diphosphate biosynthesis via DXP pathway; isopentenyl diphosphate from 1-deoxy-D-xylulose 5-phosphate: step 5/6. Functionally, converts 2C-methyl-D-erythritol 2,4-cyclodiphosphate (ME-2,4cPP) into 1-hydroxy-2-methyl-2-(E)-butenyl 4-diphosphate. This Shewanella baltica (strain OS223) protein is 4-hydroxy-3-methylbut-2-en-1-yl diphosphate synthase (flavodoxin).